A 378-amino-acid polypeptide reads, in one-letter code: 1-acyl-sn-glycerol-3-phosphate acyltransferase delta (378 aa).

Residues 11 to 31 (FLCHLVFCYVFIASGLIINTI) traverse the membrane as a helical segment. The short motif at 96–101 (HKFEID) is the HXXXXD motif element. The next 3 helical transmembrane spans lie at 125 to 145 (ELAY…VFCS), 307 to 327 (TLVN…QFLV), and 338 to 358 (LASF…MIGV).

The protein belongs to the 1-acyl-sn-glycerol-3-phosphate acyltransferase family. Widely expressed with highest levels in skeletal muscle, followed by heart, liver, prostate and thymus.

It localises to the endoplasmic reticulum membrane. The catalysed reaction is a 1-acyl-sn-glycero-3-phosphate + an acyl-CoA = a 1,2-diacyl-sn-glycero-3-phosphate + CoA. It catalyses the reaction (4Z,7Z,10Z,13Z,16Z,19Z)-docosahexaenoyl-CoA + 1-hexadecanoyl-sn-glycero-3-phosphate = 1-hexadecanoyl-2-(4Z,7Z,10Z,13Z,16Z,19Z-docosahexaenoyl)-sn-glycero-3-phosphate + CoA. The enzyme catalyses 1-octadecanoyl-sn-glycero-3-phosphate + (9Z,12Z)-octadecadienoyl-CoA = 1-octadecanoyl-2-(9Z,12Z-octadecadienoyl)-sn-glycero-3-phosphate + CoA. It carries out the reaction 1-octadecanoyl-sn-glycero-3-phosphate + (4Z,7Z,10Z,13Z,16Z,19Z)-docosahexaenoyl-CoA = 1-octadecanoyl-2-(4Z,7Z,10Z,13Z,16Z,19Z-docosahexaenoyl)-sn-glycero-3-phosphate + CoA. The catalysed reaction is (4Z,7Z,10Z,13Z,16Z,19Z)-docosahexaenoyl-CoA + 1-(9Z-octadecenoyl)-sn-glycero-3-phosphate = 1-(9Z-octadecenoyl)-2-(4Z,7Z,10Z,13Z,16Z,19Z-docosahexaenoyl)-sn-glycero-3-phosphate + CoA. Its pathway is phospholipid metabolism; CDP-diacylglycerol biosynthesis; CDP-diacylglycerol from sn-glycerol 3-phosphate: step 2/3. Functionally, converts 1-acyl-sn-glycerol-3-phosphate (lysophosphatidic acid or LPA) into 1,2-diacyl-sn-glycerol-3-phosphate (phosphatidic acid or PA) by incorporating an acyl moiety at the sn-2 position of the glycerol backbone. Exhibits high acyl-CoA specificity for polyunsaturated fatty acyl-CoA, especially docosahexaenoyl-CoA (22:6-CoA, DHA-CoA). The chain is 1-acyl-sn-glycerol-3-phosphate acyltransferase delta (AGPAT4) from Homo sapiens (Human).